The chain runs to 626 residues: DNA mismatch repair protein MutL (626 aa).

It belongs to the DNA mismatch repair MutL/HexB family.

In terms of biological role, this protein is involved in the repair of mismatches in DNA. It is required for dam-dependent methyl-directed DNA mismatch repair. May act as a 'molecular matchmaker', a protein that promotes the formation of a stable complex between two or more DNA-binding proteins in an ATP-dependent manner without itself being part of a final effector complex. The chain is DNA mismatch repair protein MutL from Chlorobium luteolum (strain DSM 273 / BCRC 81028 / 2530) (Pelodictyon luteolum).